The sequence spans 640 residues: Threonine--tRNA ligase (640 aa).

The TGS domain maps to 1-63; the sequence is MSSVTVTLPD…SEDCEIEIVT (63 aa). Residues 242 to 533 are catalytic; it reads DHRKLGREMD…LIEHYNGRFP (292 aa). The Zn(2+) site is built by cysteine 334, histidine 385, and histidine 510.

It belongs to the class-II aminoacyl-tRNA synthetase family. As to quaternary structure, homodimer. The cofactor is Zn(2+).

It is found in the cytoplasm. The enzyme catalyses tRNA(Thr) + L-threonine + ATP = L-threonyl-tRNA(Thr) + AMP + diphosphate + H(+). Catalyzes the attachment of threonine to tRNA(Thr) in a two-step reaction: L-threonine is first activated by ATP to form Thr-AMP and then transferred to the acceptor end of tRNA(Thr). The sequence is that of Threonine--tRNA ligase from Halobacterium salinarum (strain ATCC 29341 / DSM 671 / R1).